The primary structure comprises 397 residues: Heterogeneous nuclear ribonucleoprotein K homolog (397 aa).

The tract at residues M1–F41 is disordered. Residues K16–T30 are compositionally biased toward basic and acidic residues. KH domains lie at K49 to V111 and P124 to V189. Residues G220–G279 are disordered. The segment covering G224–R241 has biased composition (low complexity). Residues V316–L379 form the KH 3 domain.

Interacts with alg-1; the interaction is direct and may be strengthened through RNA-protein association. Expressed in gut, muscle, neuronal and hypodermal tissues. Highly expressed in the germline and oocytes.

Its subcellular location is the nucleus. The protein resides in the cytoplasm. Its function is as follows. RNA-binding protein which functions together with alg-1, a component of the miRNA loading complex, to modulate the processing and activity of specific miRNAs such as miR-58 and let-7 to regulate gene expression at the post-transcriptional level during embryonic, hypodermal and neuronal development. Promotes the lsy-6-mediated repression of cog-1 in uterine cells. In embryos, may play a role in the DNA damage response. The chain is Heterogeneous nuclear ribonucleoprotein K homolog from Caenorhabditis elegans.